The following is a 505-amino-acid chain: Lysine--tRNA ligase (505 aa).

2 residues coordinate Mg(2+): Glu-415 and Glu-422.

Belongs to the class-II aminoacyl-tRNA synthetase family. Homodimer. Mg(2+) serves as cofactor.

It localises to the cytoplasm. The catalysed reaction is tRNA(Lys) + L-lysine + ATP = L-lysyl-tRNA(Lys) + AMP + diphosphate. In Shigella dysenteriae serotype 1 (strain Sd197), this protein is Lysine--tRNA ligase.